The sequence spans 120 residues: Large ribosomal subunit protein bL12 (120 aa).

Belongs to the bacterial ribosomal protein bL12 family. As to quaternary structure, homodimer. Part of the ribosomal stalk of the 50S ribosomal subunit. Forms a multimeric L10(L12)X complex, where L10 forms an elongated spine to which 2 to 4 L12 dimers bind in a sequential fashion. Binds GTP-bound translation factors.

Forms part of the ribosomal stalk which helps the ribosome interact with GTP-bound translation factors. Is thus essential for accurate translation. This chain is Large ribosomal subunit protein bL12, found in Alkaliphilus metalliredigens (strain QYMF).